The primary structure comprises 323 residues: Pantothenate kinase (323 aa).

The segment covering 1 to 12 (MAEQNAASTTGV) has biased composition (polar residues). Positions 1-24 (MAEQNAASTTGVKPSPRTPDFSPY) are disordered. 108–115 (GSVAVGKS) lines the ATP pocket.

Belongs to the prokaryotic pantothenate kinase family.

It is found in the cytoplasm. It catalyses the reaction (R)-pantothenate + ATP = (R)-4'-phosphopantothenate + ADP + H(+). The protein operates within cofactor biosynthesis; coenzyme A biosynthesis; CoA from (R)-pantothenate: step 1/5. This is Pantothenate kinase from Corynebacterium glutamicum (strain R).